Reading from the N-terminus, the 999-residue chain is Ulvan lyase, long isoform (999 aa).

The signal sequence occupies residues 1-21; that stretch reads MKCLKTLLVSTTLLTAFSLNA. Substrate is bound at residue 126 to 127; it reads SH. The active-site Proton donor/acceptor is the His-127. Residues Asp-189, Asp-199, and Lys-201 each coordinate Ca(2+). The substrate site is built by Tyr-280 and Arg-297. Residues Asp-300, Asp-303, and Tyr-305 each coordinate Ca(2+). Tyr-361 is a substrate binding site.

This sequence belongs to the polysaccharide lyase 24 family.

Functionally, ulvan lyase involved in ulvan degradation. Ulvan is the main polysaccharide component of the Ulvales (green seaweed) cell wall. It is composed of disaccharide building blocks comprising 3-sulfated rhamnose (Rha3S) linked to D-glucuronic acid (GlcA), L-iduronic acid (IduA), or D-xylose (Xyl). Ulvan lyase catalyzes preferentially the endolytic cleavage of the glycosidic bond between Rha3S and the uronic acid GlcA, but not IduA, producing oligosaccharides that have unsaturated 4-deoxy-L-threo-hex-4-enopyranosiduronic acid (deltaUA) at the non-reducing end. The most abundant end products in the degradation of the ulvan polysaccharide were deltaUA-Rha3S disaccharides and deltaUA-Rha3S-IduA-Rha3S and deltaUA-Rha3S-Xyl-Rha3S tetrasaccharides. This is Ulvan lyase, long isoform from Alteromonas sp. (strain LOR).